We begin with the raw amino-acid sequence, 372 residues long: Methenyltetrahydrofolate synthase domain-containing protein (372 aa).

The segment covering 246-258 (KQAGKDVTLRDEP) has biased composition (basic and acidic residues). A disordered region spans residues 246-289 (KQAGKDVTLRDEPGSQQPAPGPIRRPQDRPQTGSRGGSRSPLQG). One can recognise an RRM domain in the interval 296–369 (ATVCVGNLPF…NALRVSLGQQ (74 aa)).

The polypeptide is Methenyltetrahydrofolate synthase domain-containing protein (Mthfsd) (Mus musculus (Mouse)).